Here is a 542-residue protein sequence, read N- to C-terminus: Thermosome subunit (542 aa).

The protein belongs to the TCP-1 chaperonin family. In terms of assembly, forms an oligomeric complex of eight-membered rings.

In terms of biological role, molecular chaperone; binds unfolded polypeptides in vitro, and has a weak ATPase activity. This is Thermosome subunit (ths) from Methanocaldococcus jannaschii (strain ATCC 43067 / DSM 2661 / JAL-1 / JCM 10045 / NBRC 100440) (Methanococcus jannaschii).